A 141-amino-acid chain; its full sequence is Hemoglobin subunit alpha-D (141 aa).

The Globin domain maps to 1-141 (MLTADDKKLI…VAAVLAEKYR (141 aa)). His-58 and His-87 together coordinate heme b.

It belongs to the globin family. As to quaternary structure, heterotetramer of two alpha-D chains and two beta chains. Red blood cells.

In terms of biological role, involved in oxygen transport from the lung to the various peripheral tissues. This is Hemoglobin subunit alpha-D (HBAD) from Aegypius monachus (Cinereous vulture).